The sequence spans 748 residues: Transcription factor hmgR (748 aa).

Residues cysteine 24–cysteine 59 constitute a DNA-binding region (zn(2)-C6 fungal-type). 2 disordered regions span residues serine 108–leucine 142 and arginine 661–alanine 683.

Its subcellular location is the nucleus. Its function is as follows. Transcription factor; part of the L-tyrosine degradation gene cluster that mediates the biosynthesis of the brownish pigment pyomelanin as an alternative melanin. Acts as a transcriptional activator for the genes of the tyrosine degradation cluster. The protein is Transcription factor hmgR of Aspergillus fumigatus (strain ATCC MYA-4609 / CBS 101355 / FGSC A1100 / Af293) (Neosartorya fumigata).